The primary structure comprises 373 residues: 3-isopropylmalate dehydrogenase (373 aa).

Position 82-93 (82-93) interacts with NAD(+); the sequence is GPKWGTGTVRPE. Residues R100, R110, R139, and D231 each coordinate substrate. Residues D231, D256, and D260 each coordinate Mg(2+). An NAD(+)-binding site is contributed by 295–306; sequence GSAPDLPANKVN.

It belongs to the isocitrate and isopropylmalate dehydrogenases family. In terms of assembly, homodimer. Mg(2+) is required as a cofactor. The cofactor is Mn(2+).

It is found in the cytoplasm. It catalyses the reaction (2R,3S)-3-isopropylmalate + NAD(+) = 4-methyl-2-oxopentanoate + CO2 + NADH. It participates in amino-acid biosynthesis; L-leucine biosynthesis; L-leucine from 3-methyl-2-oxobutanoate: step 3/4. Catalyzes the oxidation of 3-carboxy-2-hydroxy-4-methylpentanoate (3-isopropylmalate) to 3-carboxy-4-methyl-2-oxopentanoate. The product decarboxylates to 4-methyl-2 oxopentanoate. The protein is 3-isopropylmalate dehydrogenase (LEU2) of Candida albicans (Yeast).